Reading from the N-terminus, the 157-residue chain is Transmembrane protein 50A (157 aa).

Ser-2 carries the post-translational modification N-acetylserine. Ser-2 is modified (phosphoserine). Helical transmembrane passes span 26–46, 58–78, 95–115, and 126–146; these read IAAGVLFFTGWWIIIDAAVMY, TCGVIATIAFLMINAVSNGQV, IWLFIGFMLAFGSLIASMWIL, and VVYPGIAVFFQNAFIFFGGLV.

The protein belongs to the UPF0220 family.

It is found in the membrane. The polypeptide is Transmembrane protein 50A (Tmem50a) (Mus musculus (Mouse)).